A 310-amino-acid polypeptide reads, in one-letter code: tRNA-cytidine(32) 2-sulfurtransferase (310 aa).

The PP-loop motif motif lies at 47-52; it reads SGGKDS. [4Fe-4S] cluster contacts are provided by C122, C125, and C213.

It belongs to the TtcA family. As to quaternary structure, homodimer. Requires Mg(2+) as cofactor. It depends on [4Fe-4S] cluster as a cofactor.

It is found in the cytoplasm. It catalyses the reaction cytidine(32) in tRNA + S-sulfanyl-L-cysteinyl-[cysteine desulfurase] + AH2 + ATP = 2-thiocytidine(32) in tRNA + L-cysteinyl-[cysteine desulfurase] + A + AMP + diphosphate + H(+). It functions in the pathway tRNA modification. Its function is as follows. Catalyzes the ATP-dependent 2-thiolation of cytidine in position 32 of tRNA, to form 2-thiocytidine (s(2)C32). The sulfur atoms are provided by the cysteine/cysteine desulfurase (IscS) system. The sequence is that of tRNA-cytidine(32) 2-sulfurtransferase from Haemophilus influenzae (strain 86-028NP).